We begin with the raw amino-acid sequence, 772 residues long: A type blood N-acetyl-alpha-D-galactosamine deacetylase (772 aa).

The signal sequence occupies residues 1-27 (MRNRRKAVSLLTGLLVTAQLFPTAALA). Serine 87 and histidine 123 together coordinate substrate. Aspartate 126 serves as a coordination point for a divalent metal cation. The tract at residues 180–402 (WSKPTSDAER…WRIGYAENSF (223 aa)) is deacetylase activity. Tyrosine 236 is a binding site for substrate. Histidine 278 serves as a coordination point for a divalent metal cation. One can recognise an F5/8 type C domain in the interval 494 to 605 (SDDLEIAVVE…KDLVASGSDW (112 aa)). The CBM32 carbohydrate-binding domain stretch occupies residues 502 to 765 (VENPYTLIPQ…VCVSPVVDFD (264 aa)). The segment at 515–772 (TATATSVYGG…DFDYFSYVGE (258 aa)) is not required for activity on soluble substrates.

A divalent metal cation serves as cofactor.

It catalyses the reaction an N-acetyl-alpha-D-galactosaminyl-(1-&gt;3)-[alpha-L-fucosyl-(1-&gt;2)]-beta-D-galactosyl derivative + H2O = an alpha-D-galactosaminyl-(1-&gt;3)-[alpha-L-fucosyl-(1-&gt;2)]-beta-D-galactosyl derivative + acetate. Its activity is regulated as follows. Inhibited by EDTA. One of an enzyme pair that work together to convert the A antigen to the H antigen of the O blood type, which together release galactosamine. Catalyzes the first step in the conversion, generating the substrate for the subsequent enzyme (FpGalNase, AC P0DTR5). Works on many different A antigen subtypes. Glu-90 probably activates a nucleophilic water molecule to start the deacetylation reaction. In Flavonifractor plautii (Fusobacterium plautii), this protein is A type blood N-acetyl-alpha-D-galactosamine deacetylase.